The sequence spans 358 residues: Alanine racemase (358 aa).

The Proton acceptor; specific for D-alanine role is filled by Lys-34. N6-(pyridoxal phosphate)lysine is present on Lys-34. Position 129 (Arg-129) interacts with substrate. Tyr-254 acts as the Proton acceptor; specific for L-alanine in catalysis. Met-302 lines the substrate pocket.

It belongs to the alanine racemase family. Pyridoxal 5'-phosphate is required as a cofactor.

The enzyme catalyses L-alanine = D-alanine. The protein operates within amino-acid biosynthesis; D-alanine biosynthesis; D-alanine from L-alanine: step 1/1. In terms of biological role, catalyzes the interconversion of L-alanine and D-alanine. May also act on other amino acids. The chain is Alanine racemase (alr) from Hamiltonella defensa subsp. Acyrthosiphon pisum (strain 5AT).